The chain runs to 219 residues: Large ribosomal subunit protein uL1 (219 aa).

Belongs to the universal ribosomal protein uL1 family. In terms of assembly, part of the 50S ribosomal subunit.

Probably involved in E site tRNA release. Binds directly to 23S rRNA. Its function is as follows. Protein L1 is also a translational repressor protein, it controls the translation of its operon by binding to its mRNA. This is Large ribosomal subunit protein uL1 from Methanocaldococcus jannaschii (strain ATCC 43067 / DSM 2661 / JAL-1 / JCM 10045 / NBRC 100440) (Methanococcus jannaschii).